The following is a 677-amino-acid chain: Epithelial splicing regulatory protein 1 (677 aa).

RRM domains are found at residues 225 to 302, 326 to 406, and 445 to 525; these read TVVR…KATG, VIVR…RSTA, and DCVR…QCSA. The residue at position 543 (serine 543) is a Phosphoserine. Position 578 is an omega-N-methylarginine (arginine 578).

This sequence belongs to the ESRP family.

It localises to the nucleus. MRNA splicing factor that regulates the formation of epithelial cell-specific isoforms. Specifically regulates the expression of FGFR2-IIIb, an epithelial cell-specific isoform of FGFR2. Also regulates the splicing of CD44, CTNND1, ENAH, 3 transcripts that undergo changes in splicing during the epithelial-to-mesenchymal transition (EMT). Acts by directly binding specific sequences in mRNAs. Binds the GU-rich sequence motifs in the ISE/ISS-3, a cis-element regulatory region present in the mRNA of FGFR2. Regulates splicing and expression of genes involved in inner ear development, auditory hair cell differentiation, and cell fate specification in the cochlear epithelium. The polypeptide is Epithelial splicing regulatory protein 1 (Esrp1) (Rattus norvegicus (Rat)).